We begin with the raw amino-acid sequence, 804 residues long: Zinc finger protein YGR067C (804 aa).

2 C2H2-type zinc fingers span residues 8–30 (YICS…ERSH) and 36–59 (FQCQ…RTVH). Positions 782 to 796 (QEFSASSTDNKQSKN) are enriched in polar residues. The segment at 782 to 804 (QEFSASSTDNKQSKNIEIFSQIK) is disordered.

Its subcellular location is the nucleus. The polypeptide is Zinc finger protein YGR067C (Saccharomyces cerevisiae (strain ATCC 204508 / S288c) (Baker's yeast)).